A 120-amino-acid polypeptide reads, in one-letter code: Large ribosomal subunit protein uL22 (120 aa).

It belongs to the universal ribosomal protein uL22 family. As to quaternary structure, part of the 50S ribosomal subunit.

In terms of biological role, this protein binds specifically to 23S rRNA; its binding is stimulated by other ribosomal proteins, e.g. L4, L17, and L20. It is important during the early stages of 50S assembly. It makes multiple contacts with different domains of the 23S rRNA in the assembled 50S subunit and ribosome. The globular domain of the protein is located near the polypeptide exit tunnel on the outside of the subunit, while an extended beta-hairpin is found that lines the wall of the exit tunnel in the center of the 70S ribosome. The protein is Large ribosomal subunit protein uL22 of Corynebacterium kroppenstedtii (strain DSM 44385 / JCM 11950 / CIP 105744 / CCUG 35717).